The following is an 88-amino-acid chain: uncharacterized protein (88 aa).

2 helical membrane-spanning segments follow: residues leucine 27–histidine 46 and serine 61–isoleucine 83.

Its subcellular location is the membrane. This is an uncharacterized protein from Saccharomyces cerevisiae (strain ATCC 204508 / S288c) (Baker's yeast).